We begin with the raw amino-acid sequence, 511 residues long: Maturase K (511 aa).

Belongs to the intron maturase 2 family. MatK subfamily.

The protein resides in the plastid. It is found in the chloroplast. Functionally, usually encoded in the trnK tRNA gene intron. Probably assists in splicing its own and other chloroplast group II introns. This is Maturase K from Triticum aestivum (Wheat).